The primary structure comprises 458 residues: MTRDVSQLFGTDGVRGRANFEPMTVETSVLLGKAIAGVLLEKHAGKHRVVVGKDTRLSGYMFENALIAGLTSMGIETLMLGPIPTPGVAFITRAYRADAGIMISASHNPYRDNGIKIFSSDGFKIGQAVEERIEAMVASKDFGKLPDDHAVGKNKRVKDATGRYIEYAKATFPKGRTLKGLRIVLDCAHGATYRVAPSVFEELDAEVICYGCEPSGCNINAGCGALWPSTIQKAVIEHKADVGIALDGDGDRLIMVDEKGHIVDGDMLLSICASDLKRRQALPDNRVVATVMTNFGVLRYLESLGIQVTISPVGDRHVLQHMLENQAVLGGEQSGHMIFLDYNTTGDGIVSALQVLRIMIESESTLSDLTACIVKSPQALINVPVTKKVPLESLANVQGVLKEVKEVLGDSGRILLRYSGTENICRVMVEGTKKHQVDSLAKTIVDVVEAEIGAGISE.

The active-site Phosphoserine intermediate is the serine 106. Mg(2+) contacts are provided by serine 106, aspartate 247, aspartate 249, and aspartate 251. Position 106 is a phosphoserine (serine 106).

It belongs to the phosphohexose mutase family. Mg(2+) is required as a cofactor. In terms of processing, activated by phosphorylation.

The enzyme catalyses alpha-D-glucosamine 1-phosphate = D-glucosamine 6-phosphate. Functionally, catalyzes the conversion of glucosamine-6-phosphate to glucosamine-1-phosphate. This is Phosphoglucosamine mutase from Chlamydia trachomatis serovar L2 (strain ATCC VR-902B / DSM 19102 / 434/Bu).